The following is a 30-amino-acid chain: Cytochrome c oxidase subunit 5C (30 aa).

The helical transmembrane segment at 15 to 30 (VVKELVIXXXLGLXAG) threads the bilayer.

This sequence belongs to the cytochrome c oxidase subunit 5C family.

The protein localises to the mitochondrion inner membrane. Its function is as follows. This protein is one of the nuclear-coded polypeptide chains of cytochrome c oxidase, the terminal oxidase in mitochondrial electron transport. The chain is Cytochrome c oxidase subunit 5C (COX5C) from Solanum tuberosum (Potato).